The chain runs to 115 residues: Large ribosomal subunit protein uL22c (115 aa).

It belongs to the universal ribosomal protein uL22 family. As to quaternary structure, part of the 50S ribosomal subunit.

It localises to the plastid. The protein resides in the chloroplast. Functionally, this protein binds specifically to 23S rRNA. In terms of biological role, the globular domain of the protein is located near the polypeptide exit tunnel on the outside of the subunit, while an extended beta-hairpin is found that lines the wall of the exit tunnel in the center of the 70S ribosome. This is Large ribosomal subunit protein uL22c (rpl22) from Phaeodactylum tricornutum (strain CCAP 1055/1).